We begin with the raw amino-acid sequence, 96 residues long: Cobalt transport protein CbiN (96 aa).

The next 2 membrane-spanning stretches (helical) occupy residues 4–24 (WLAA…VSAG) and 59–79 (IESL…GYYL).

It belongs to the CbiN family. In terms of assembly, forms an energy-coupling factor (ECF) transporter complex composed of an ATP-binding protein (A component, CbiO), a transmembrane protein (T component, CbiQ) and 2 possible substrate-capture proteins (S components, CbiM and CbiN) of unknown stoichimetry.

The protein localises to the cell membrane. It functions in the pathway cofactor biosynthesis; adenosylcobalamin biosynthesis. Its function is as follows. Part of the energy-coupling factor (ECF) transporter complex CbiMNOQ involved in cobalt import. The chain is Cobalt transport protein CbiN from Halobacterium salinarum (strain ATCC 29341 / DSM 671 / R1).